A 375-amino-acid polypeptide reads, in one-letter code: Dehydrodolichyl diphosphate synthase complex subunit NUS1 (375 aa).

The span at Met1–Val28 shows a compositional bias: basic and acidic residues. Residues Met1–Val48 are disordered. The helical transmembrane segment at Tyr97–Tyr119 threads the bilayer.

It belongs to the UPP synthase family. As to quaternary structure, forms an active dehydrodolichyl diphosphate synthase complex with either SRT1 or RER2. Mg(2+) is required as a cofactor.

The protein localises to the endoplasmic reticulum membrane. It is found in the lipid droplet. Its subcellular location is the nucleus membrane. The enzyme catalyses n isopentenyl diphosphate + (2E,6E)-farnesyl diphosphate = a di-trans,poly-cis-polyprenyl diphosphate + n diphosphate. It participates in protein modification; protein glycosylation. Functionally, with SRT1 or RER2, forms the dehydrodolichyl diphosphate synthase (DDS) complex, an essential component of the dolichol monophosphate (Dol-P) biosynthetic machinery. Adds multiple copies of isopentenyl pyrophosphate (IPP) to farnesyl pyrophosphate (FPP) to produce dehydrodolichyl diphosphate (Dedol-PP), a precursor of dolichol which is utilized as a sugar carrier in protein glycosylation in the endoplasmic reticulum (ER). In Saccharomyces cerevisiae (strain ATCC 204508 / S288c) (Baker's yeast), this protein is Dehydrodolichyl diphosphate synthase complex subunit NUS1 (NUS1).